A 706-amino-acid polypeptide reads, in one-letter code: Translation initiation factor IF-2 (706 aa).

Basic and acidic residues predominate over residues 55–81; sequence AKETANEKPAEQKKQSSNKINDRKKND. Residues 55-127 are disordered; the sequence is AKETANEKPA…KPKKELPEKI (73 aa). The span at 82-98 shows a compositional bias: low complexity; the sequence is VQNNQFNKNKKNNNQNK. The 170-residue stretch at 207 to 376 folds into the tr-type G domain; sequence VRPPVVTIMG…LLVSEVGELK (170 aa). Residues 216–223 are G1; that stretch reads GHVDHGKT. Residue 216 to 223 participates in GTP binding; it reads GHVDHGKT. The G2 stretch occupies residues 241-245; sequence GITQH. A G3 region spans residues 262-265; it reads DTPG. Residues 262–266 and 316–319 contribute to the GTP site; these read DTPGH and NKID. The interval 316-319 is G4; the sequence is NKID. Positions 352-354 are G5; the sequence is SAK.

Belongs to the TRAFAC class translation factor GTPase superfamily. Classic translation factor GTPase family. IF-2 subfamily.

It is found in the cytoplasm. In terms of biological role, one of the essential components for the initiation of protein synthesis. Protects formylmethionyl-tRNA from spontaneous hydrolysis and promotes its binding to the 30S ribosomal subunits. Also involved in the hydrolysis of GTP during the formation of the 70S ribosomal complex. This Bacillus pumilus (strain SAFR-032) protein is Translation initiation factor IF-2.